A 210-amino-acid polypeptide reads, in one-letter code: Small ribosomal subunit protein uS3 (210 aa).

Positions 17-86 constitute a KH type-2 domain; it reads IDEFLEKELR…NPQIEVEEIK (70 aa).

Belongs to the universal ribosomal protein uS3 family. As to quaternary structure, part of the 30S ribosomal subunit.

Binds the lower part of the 30S subunit head. This Pyrococcus furiosus (strain ATCC 43587 / DSM 3638 / JCM 8422 / Vc1) protein is Small ribosomal subunit protein uS3.